The primary structure comprises 120 residues: Large-conductance mechanosensitive channel (120 aa).

Transmembrane regions (helical) follow at residues 7–27 (EFAL…GAAF) and 64–84 (GLFI…FIFV).

This sequence belongs to the MscL family. In terms of assembly, homopentamer.

Its subcellular location is the cell membrane. Channel that opens in response to stretch forces in the membrane lipid bilayer. May participate in the regulation of osmotic pressure changes within the cell. In Staphylococcus aureus (strain Mu3 / ATCC 700698), this protein is Large-conductance mechanosensitive channel.